A 254-amino-acid polypeptide reads, in one-letter code: Phosphomannomutase (254 aa).

Asp-16 (nucleophile) is an active-site residue. Residues Asp-16 and Asp-18 each coordinate Mg(2+). The active-site Proton donor/acceptor is Asp-18. Alpha-D-mannose 1-phosphate-binding residues include Arg-25, Arg-129, Arg-140, Arg-147, Ser-185, and Asp-187. Mg(2+) is bound by residues Asp-216, Tyr-228, Asp-230, and Thr-233.

The protein belongs to the eukaryotic PMM family. Homodimer.

The protein localises to the cytoplasm. The enzyme catalyses alpha-D-mannose 1-phosphate = D-mannose 6-phosphate. It functions in the pathway nucleotide-sugar biosynthesis; GDP-alpha-D-mannose biosynthesis; alpha-D-mannose 1-phosphate from D-fructose 6-phosphate: step 2/2. Functionally, involved in the synthesis of the GDP-mannose and dolichol-phosphate-mannose required for a number of critical mannosyl transfer reactions. Required for maintaining N-linked glycoprotein glycosylation at the neuromuscular junction (NMJ) synaptomatrix, and thus acts in multiple pathways that prevent NMJ structural overgrowth, restrict synaptic bouton differentiation, and limit NMJ neurotransmission strength, in order to maintain viability, coordinate movement, and in adults ensure correct wing positioning. Acts in the NMJ trans-synaptic Wg pathway via glycosylation of synaptic Mmp2 which enables dlp/wg signaling during development. This chain is Phosphomannomutase, found in Drosophila melanogaster (Fruit fly).